The following is a 345-amino-acid chain: uncharacterized protein (345 aa).

The protein belongs to the transketolase family. Thiamine diphosphate serves as cofactor.

This is an uncharacterized protein from Sinorhizobium fredii (strain NBRC 101917 / NGR234).